A 241-amino-acid polypeptide reads, in one-letter code: Ribosomal RNA small subunit methyltransferase J (241 aa).

S-adenosyl-L-methionine contacts are provided by residues 94-95 (RD) and D163.

The protein belongs to the methyltransferase superfamily. RsmJ family.

The protein localises to the cytoplasm. It catalyses the reaction guanosine(1516) in 16S rRNA + S-adenosyl-L-methionine = N(2)-methylguanosine(1516) in 16S rRNA + S-adenosyl-L-homocysteine + H(+). Its function is as follows. Specifically methylates the guanosine in position 1516 of 16S rRNA. The protein is Ribosomal RNA small subunit methyltransferase J of Francisella tularensis subsp. tularensis (strain FSC 198).